A 280-amino-acid chain; its full sequence is 2,3,4,5-tetrahydropyridine-2,6-dicarboxylate N-succinyltransferase (280 aa).

2 residues coordinate substrate: Arg-109 and Asp-146.

Belongs to the transferase hexapeptide repeat family. As to quaternary structure, homotrimer.

It localises to the cytoplasm. It carries out the reaction (S)-2,3,4,5-tetrahydrodipicolinate + succinyl-CoA + H2O = (S)-2-succinylamino-6-oxoheptanedioate + CoA. Its pathway is amino-acid biosynthesis; L-lysine biosynthesis via DAP pathway; LL-2,6-diaminopimelate from (S)-tetrahydrodipicolinate (succinylase route): step 1/3. This is 2,3,4,5-tetrahydropyridine-2,6-dicarboxylate N-succinyltransferase from Blochmanniella floridana.